We begin with the raw amino-acid sequence, 461 residues long: Transforming growth factor beta-1-induced transcript 1 protein (461 aa).

Methionine 1 is subject to N-acetylmethionine. The tract at residues methionine 1–glycine 87 is disordered. A transcription activation region spans residues methionine 1–glycine 200. The interaction with PTK2B/PYK2 stretch occupies residues methionine 1–valine 240. The LD motif 1 motif lies at aspartate 3–threonine 15. A Phosphothreonine modification is found at threonine 33. The residue at position 38 (tyrosine 38) is a Phosphotyrosine. Polar residues predominate over residues histidine 40 to alanine 52. Tyrosine 60 carries the phosphotyrosine; by FAK2 and FYN modification. Residue serine 68 is modified to Phosphoserine. The tract at residues serine 83 to proline 136 is interaction with PTK2/FAK1. An LD motif 2 motif is present at residues glutamate 92–glutamine 104. The tract at residues proline 116–threonine 152 is disordered. Basic and acidic residues predominate over residues glutamate 124–arginine 135. 6 positions are modified to phosphoserine: serine 137, serine 140, serine 141, serine 143, serine 164, and serine 186. An LD motif 3 motif is present at residues glutamate 157–phenylalanine 168. Residues asparagine 172–aspartate 205 are disordered. Residues proline 183–serine 192 are compositionally biased toward polar residues. A Phosphothreonine modification is found at threonine 188. 2 positions are modified to phosphoserine: serine 192 and serine 194. The LD motif 4 signature appears at serine 203–leucine 215. LIM zinc-binding domains follow at residues glycine 226 to proline 285, arginine 286 to alanine 343, proline 344 to serine 403, and leucine 404 to glycine 461. Serine 403 carries the phosphoserine modification. At threonine 407 the chain carries Phosphothreonine.

This sequence belongs to the paxillin family. Homooligomer. Interacts with PPARG. Interacts with TRAF4. Interacts with CRIP2. Interacts with HSPB1. Interacts with ILK. Interacts with LIMS1 and LIMS2. Interacts with NCK2. Interacts with NUDT16L1. Interacts with PAK. Interacts with PTPN12. Interacts with TCF3. Interacts with TCF7L2. Interacts with VCL. Interacts (via LD motif 3) with GIT1. Also interacts with GIT2. Forms a complex with ARHGEF7. Interacts with AR/androgen receptor in a ligand-dependent manner. Interacts with CSK. Interacts with PTK2/FAK1 and PTK2B/PYK2. Interacts with SLC6A3 and SLC6A4. Interacts with NR3C1. Interacts with SMAD3. Interacts with MAPK15. Interacts with SRC. Interacts with LYN. Interacts with talin. Interacts (via LIM zinc-binding domain 2) with CBLC (via RING-type zinc finger); the interaction is direct and enhances CBLC E3 ubiquitin-protein ligase activity. Interacts with PARVA. Interacts with PXN. Phosphorylated by gonadotropin-releasing hormone-activated SRC. As to expression, expressed in platelets, smooth muscle and prostate stromal cells (at protein level).

The protein resides in the cell junction. It localises to the focal adhesion. It is found in the nucleus matrix. The protein localises to the cytoplasm. Its subcellular location is the cytoskeleton. Its function is as follows. Functions as a molecular adapter coordinating multiple protein-protein interactions at the focal adhesion complex and in the nucleus. Links various intracellular signaling modules to plasma membrane receptors and regulates the Wnt and TGFB signaling pathways. May also regulate SLC6A3 and SLC6A4 targeting to the plasma membrane hence regulating their activity. In the nucleus, functions as a nuclear receptor coactivator regulating glucocorticoid, androgen, mineralocorticoid and progesterone receptor transcriptional activity. May play a role in the processes of cell growth, proliferation, migration, differentiation and senescence. May have a zinc-dependent DNA-binding activity. This Homo sapiens (Human) protein is Transforming growth factor beta-1-induced transcript 1 protein (TGFB1I1).